A 407-amino-acid chain; its full sequence is Tryptophan synthase beta chain (407 aa).

At K98 the chain carries N6-(pyridoxal phosphate)lysine.

The protein belongs to the TrpB family. Tetramer of two alpha and two beta chains. Pyridoxal 5'-phosphate serves as cofactor.

It carries out the reaction (1S,2R)-1-C-(indol-3-yl)glycerol 3-phosphate + L-serine = D-glyceraldehyde 3-phosphate + L-tryptophan + H2O. The protein operates within amino-acid biosynthesis; L-tryptophan biosynthesis; L-tryptophan from chorismate: step 5/5. Its function is as follows. The beta subunit is responsible for the synthesis of L-tryptophan from indole and L-serine. In Bradyrhizobium sp. (strain BTAi1 / ATCC BAA-1182), this protein is Tryptophan synthase beta chain.